We begin with the raw amino-acid sequence, 205 residues long: HTH-type transcriptional repressor KstR2 (205 aa).

Positions 10-70 (ASRRDELLQL…EVLRDFLDWL (61 aa)) constitute an HTH tetR-type domain. The H-T-H motif DNA-binding region spans 33–52 (TVRDIADSAGILSGSLYHHF).

As to quaternary structure, homodimer.

Functionally, controls the expression of a small regulon that may play a role in the utilization of cholesterol. The chain is HTH-type transcriptional repressor KstR2 (kstR2) from Mycolicibacterium smegmatis (strain ATCC 700084 / mc(2)155) (Mycobacterium smegmatis).